We begin with the raw amino-acid sequence, 422 residues long: F-box/kelch-repeat protein At3g27150 (422 aa).

The F-box domain maps to 68 to 114 (LLNVPQLVYELEVEILARVPRFEYWKLKLLNKGFSRLLKSDEIFKVR). Kelch repeat units lie at residues 162–212 (ESLC…TCGT), 213–264 (VVFV…YLRG), 266–312 (FYVL…SPPL), 314–361 (AVVG…VAFK), and 366–412 (KLLV…RFNH).

In Arabidopsis thaliana (Mouse-ear cress), this protein is F-box/kelch-repeat protein At3g27150.